Reading from the N-terminus, the 816-residue chain is Protein kinase C-binding protein NELL2 (816 aa).

The N-terminal stretch at M1–G21 is a signal peptide. N-linked (GlcNAc...) asparagine glycosylation is found at N53, N225, N293, and N298. Residues P64–C228 form the Laminin G-like domain. Residues R272–K331 form the VWFC 1 domain. An EGF-like 1 domain is found at G397 to E439. 3 cysteine pairs are disulfide-bonded: C401-C413, C407-C422, and C424-C438. 3 residues coordinate Ca(2+): D440, I441, and E443. Positions D440–T481 constitute an EGF-like 2; calcium-binding domain. Disulfide bonds link C444–C457, C451–C466, C468–C480, C486–C499, C493–C508, C510–C521, C525–C535, C529–C541, and C543–C552. Ca(2+)-binding residues include N459, T460, and S463. In terms of domain architecture, EGF-like 3; calcium-binding spans E482–K522. A glycan (N-linked (GlcNAc...) asparagine) is linked at N517. One can recognise an EGF-like 4 domain in the interval A523 to E553. Residue T548 is glycosylated (O-linked (GlcNAc...) threonine). Positions 555, 556, and 558 each coordinate Ca(2+). The EGF-like 5; calcium-binding domain occupies D555–E601. Intrachain disulfides connect C559–C572, C566–C581, and C583–C600. N574, L575, and W578 together coordinate Ca(2+). Positions 602, 603, and 605 each coordinate Ca(2+). An EGF-like 6; calcium-binding domain is found at D602–T637. 3 disulfide bridges follow: C606–C619, C613–C628, and C630–C636. A glycan (N-linked (GlcNAc...) asparagine) is linked at N615. N621, L622, and G625 together coordinate Ca(2+). N-linked (GlcNAc...) asparagine glycosylation is present at N635. VWFC domains lie at G638–D693 and S698–V756.

In terms of assembly, homotrimer. Binds to PRKCB. Interacts with NICOL1; this interaction triggers epididymal differentiation. Interacts (via the EGF domains) with ROBO3 (via Fibronectin type-III 1 domain) with a 3:3 stoichiometry; this interaction promotes oligomerization of ROBO3 resulting in the repulsion of commissural axons in the midline.

The protein resides in the secreted. Functionally, plays multiple roles in neural tissues, regulates neuronal proliferation, survival, differentiation, polarization, as well as axon guidance and synaptic functions. Plays an important role in axon development during neuronal differentiation through the MAPK intracellular signaling pathway. Via binding to its receptor ROBO3, plays a role in axon guidance, functioning as a repulsive axon guidance cue that contributes to commissural axon guidance to the midline. Required for neuron survival through the modulation of MAPK signaling pathways too. Involved in the regulation of hypothalamic GNRH secretion and the control of puberty. In terms of biological role, epididymal-secreted protein that signals through a ROS1-pathway to regulate the epididymal initial segment (IS) maturation, sperm maturation and male fertility. This chain is Protein kinase C-binding protein NELL2, found in Homo sapiens (Human).